Here is a 1679-residue protein sequence, read N- to C-terminus: Furin-like protease 2 (1679 aa).

Residues methionine 1–valine 10 show a composition bias toward polar residues. The segment at methionine 1–serine 42 is disordered. 3 N-linked (GlcNAc...) asparagine glycosylation sites follow: asparagine 3, asparagine 109, and asparagine 130. Residues valine 139–aspartate 164 form a disordered region. Low complexity predominate over residues arginine 147–asparagine 160. An N-linked (GlcNAc...) asparagine glycan is attached at asparagine 205. One can recognise a Peptidase S8 domain in the interval glutamine 383 to valine 705. The Charge relay system role is filled by aspartate 417. Positions histidine 424–histidine 456 are disordered. Positions isoleucine 439 to asparagine 451 are enriched in polar residues. An N-linked (GlcNAc...) asparagine glycan is attached at asparagine 442. Histidine 456 (charge relay system) is an active-site residue. 2 cysteine pairs are disulfide-bonded: cysteine 473/cysteine 629 and cysteine 565/cysteine 595. Asparagine 480 carries an N-linked (GlcNAc...) asparagine glycan. The active-site Charge relay system is the serine 637. A P/Homo B domain is found at valine 714–glutamine 852. A disulfide bond links cysteine 720 and cysteine 748. Asparagine 927 carries an N-linked (GlcNAc...) asparagine glycan. FU repeat units lie at residues lysine 961 to proline 1006, valine 1009 to glutamate 1056, asparagine 1060 to glutamate 1104, aspartate 1107 to alanine 1152, arginine 1156 to tyrosine 1204, glutamate 1208 to valine 1253, glycine 1256 to serine 1299, arginine 1301 to lysine 1346, aspartate 1348 to aspartate 1393, and serine 1396 to alanine 1443. Residue asparagine 1060 is glycosylated (N-linked (GlcNAc...) asparagine). N-linked (GlcNAc...) asparagine glycosylation is present at asparagine 1181. N-linked (GlcNAc...) asparagine glycans are attached at residues asparagine 1274 and asparagine 1277. Asparagine 1439 carries N-linked (GlcNAc...) asparagine glycosylation. Residues alanine 1512 to leucine 1532 traverse the membrane as a helical segment. The Cytoplasmic segment spans residues glutamine 1533–serine 1679. The disordered stretch occupies residues threonine 1660–serine 1679. The segment covering proline 1668–serine 1679 has biased composition (polar residues).

It belongs to the peptidase S8 family. Furin subfamily. Ca(2+) is required as a cofactor. As to expression, transient expression in a subset of central nervous system neurons during embryonic stages 12-13. Expression in developing tracheal tree from stage 13 to end of embryonic development.

The protein localises to the membrane. The catalysed reaction is Release of mature proteins from their proproteins by cleavage of -Arg-Xaa-Yaa-Arg-|-Zaa- bonds, where Xaa can be any amino acid and Yaa is Arg or Lys. Releases albumin, complement component C3 and von Willebrand factor from their respective precursors.. Its function is as follows. Furin is likely to represent the ubiquitous endoprotease activity within constitutive secretory pathways and capable of cleavage at the RX(K/R)R consensus motif. The chain is Furin-like protease 2 (Fur2) from Drosophila melanogaster (Fruit fly).